The following is a 434-amino-acid chain: MSAGTAADKHFSNSFFAAPLTEADPEIAEAVAKELGRQQHEIELIASENIVSRAVLEAQGSVLTNKYAEGYPGRRYYGGCQFVDIAEDLAIERAKRLFDCGFANVQPNSGSQANQGVFLALMQPGDTFLGLDLAAGGHLTHGAPPNVSGKWFKPVSYTVRREDQRIDMEQVAQLAQEHKPKVIIAGGSGYPRHWDFAKFREIADSVGAYFMVDMAHFAGLVAAGVHPSPFPHAHVATTTTHKTLRGPRGGMILTNDEALAKKFNSAIFPGLQGGPLMHVIAGKAVAFGEALKPEFKIYARQVVENARALADTLISGGYDITSGGTDNHLMLVDLQRKGLTGKAAEAALSRAHITCNKNGVPFDTQKPTITSGIRLGTPAGTSRGFGVAEFKQIGGFIVEVLDGLAAKGEAGDSAVEADVKTRVHALTDRFPIYG.

Residues Leu133 and 137–139 (GHL) each bind (6S)-5,6,7,8-tetrahydrofolate. Position 242 is an N6-(pyridoxal phosphate)lysine (Lys242).

Belongs to the SHMT family. As to quaternary structure, homodimer. It depends on pyridoxal 5'-phosphate as a cofactor.

Its subcellular location is the cytoplasm. The catalysed reaction is (6R)-5,10-methylene-5,6,7,8-tetrahydrofolate + glycine + H2O = (6S)-5,6,7,8-tetrahydrofolate + L-serine. Its pathway is one-carbon metabolism; tetrahydrofolate interconversion. The protein operates within amino-acid biosynthesis; glycine biosynthesis; glycine from L-serine: step 1/1. Catalyzes the reversible interconversion of serine and glycine with tetrahydrofolate (THF) serving as the one-carbon carrier. This reaction serves as the major source of one-carbon groups required for the biosynthesis of purines, thymidylate, methionine, and other important biomolecules. Also exhibits THF-independent aldolase activity toward beta-hydroxyamino acids, producing glycine and aldehydes, via a retro-aldol mechanism. This is Serine hydroxymethyltransferase from Methylobacterium radiotolerans (strain ATCC 27329 / DSM 1819 / JCM 2831 / NBRC 15690 / NCIMB 10815 / 0-1).